The chain runs to 328 residues: Protoheme IX farnesyltransferase (328 aa).

A run of 8 helical transmembrane segments spans residues 31–51 (IILLLLITTAAGMWLGAKGEV), 53–73 (LFLLFVTLTGGALASGAANAI), 120–140 (VFANLLAALLAMSGIVFYVGV), 153–173 (IVIGGAAGAIPPLVGWAAVTG), 181–201 (LLFAIIVVWTPPHFWALAIYI), 226–246 (IWVYTLILIPMTLLLVYPLHV), 250–270 (IYAVLATYLGVIFIKKAWQLL), and 285–305 (YSIYYMMLLCLVMVIDSLPFT).

Belongs to the UbiA prenyltransferase family. Protoheme IX farnesyltransferase subfamily.

Its subcellular location is the cell inner membrane. It carries out the reaction heme b + (2E,6E)-farnesyl diphosphate + H2O = Fe(II)-heme o + diphosphate. It functions in the pathway porphyrin-containing compound metabolism; heme O biosynthesis; heme O from protoheme: step 1/1. Functionally, converts heme B (protoheme IX) to heme O by substitution of the vinyl group on carbon 2 of heme B porphyrin ring with a hydroxyethyl farnesyl side group. This Trichodesmium erythraeum (strain IMS101) protein is Protoheme IX farnesyltransferase.